Here is a 603-residue protein sequence, read N- to C-terminus: Glutamyl-tRNA(Gln) amidotransferase subunit E (603 aa).

Belongs to the GatB/GatE family. GatE subfamily. As to quaternary structure, heterodimer of GatD and GatE.

The enzyme catalyses L-glutamyl-tRNA(Gln) + L-glutamine + ATP + H2O = L-glutaminyl-tRNA(Gln) + L-glutamate + ADP + phosphate + H(+). Functionally, allows the formation of correctly charged Gln-tRNA(Gln) through the transamidation of misacylated Glu-tRNA(Gln) in organisms which lack glutaminyl-tRNA synthetase. The reaction takes place in the presence of glutamine and ATP through an activated gamma-phospho-Glu-tRNA(Gln). The GatDE system is specific for glutamate and does not act on aspartate. The chain is Glutamyl-tRNA(Gln) amidotransferase subunit E from Thermoplasma acidophilum (strain ATCC 25905 / DSM 1728 / JCM 9062 / NBRC 15155 / AMRC-C165).